The chain runs to 277 residues: Large ribosomal subunit protein uL2cz/uL2cy (277 aa).

2 disordered regions span residues 1 to 31 (MAIH…NTRK) and 227 to 277 (NPVD…RRSK).

This sequence belongs to the universal ribosomal protein uL2 family. In terms of assembly, part of the 50S ribosomal subunit.

Its subcellular location is the plastid. It is found in the chloroplast. The chain is Large ribosomal subunit protein uL2cz/uL2cy (rpl2-A) from Manihot esculenta (Cassava).